Reading from the N-terminus, the 436-residue chain is MRQALPLVTRQGDRIAIVSGLRTPFARQATAFHGIPAVDLGKMVVGELLARSEIPADAIEQLVFGQVVQMPEAPNIAREIVLGTGMNVHTGAYSVSRACATSFQAVANVAESLMAGTIRAGIAGGADSSSVLPIGVSKALARALVDVNKARTTRQRLTLFSRLRLRDLLPVPPAVAEYSTGLRMGDTAEQMAKTYGITREQQDALAHRSHQRAAQAWAEGKLAEEVMTTYVPPYKNPFAEDNNIRGTSTLADYAKLRPAFDRKHGSVTAANSTPLTDGAAAVILMTESRAKELGLRPLGYLRSYAFTAIDVWQDMLLGPAWSTPLALERAGLTMADLTLFDMHEAFAAQTLANLQLLGSERFAREVLGRAQATGEVDDAKFNVLGGSIAYGHPFAATGARMITQTLHELRRRGGGFGLVTACAAGGLGAAMVLEAE.

Cysteine 99 (acyl-thioester intermediate) is an active-site residue. Active-site proton acceptor residues include histidine 392 and cysteine 422.

The protein belongs to the thiolase-like superfamily. Thiolase family. As to quaternary structure, heterotetramer of two alpha chains (FadJ) and two beta chains (FadI).

It is found in the cytoplasm. The catalysed reaction is an acyl-CoA + acetyl-CoA = a 3-oxoacyl-CoA + CoA. It participates in lipid metabolism; fatty acid beta-oxidation. In terms of biological role, catalyzes the final step of fatty acid oxidation in which acetyl-CoA is released and the CoA ester of a fatty acid two carbons shorter is formed. The chain is 3-ketoacyl-CoA thiolase from Salmonella paratyphi C (strain RKS4594).